The chain runs to 154 residues: Protein X (154 aa).

The tract at residues 28 to 48 is disordered; the sequence is RPLPGPLGTLPPASPPAVPTD. The segment at 68–117 is mitochondrial targeting sequence; the sequence is PCALRFTSARRMETTVNAHGNLPKVLHKRTLGLSAMSTTDLEAYFKDCVF.

It belongs to the orthohepadnavirus protein X family. As to quaternary structure, may form homodimer. May interact with host CEBPA, CFLAR, CREB1, DDB1, E4F1, HBXIP, HSPD1/HSP60, NFKBIA, POLR2E and SMAD4. Interacts with host SMC5-SMC6 complex and induces its degradation. Interacts with host TRPC4AP; leading to prevent ubiquitination of TRPC4AP. Interacts with host PLSCR1; this interaction promotes ubiquitination and degradation of HBx and impairs HBx-mediated cell proliferation. In terms of processing, a fraction may be phosphorylated in insect cells and HepG2 cells, a human hepatoblastoma cell line. Phosphorylated in vitro by host protein kinase C or mitogen-activated protein kinase. N-acetylated in insect cells.

It is found in the host cytoplasm. Its subcellular location is the host nucleus. The protein localises to the host mitochondrion. Multifunctional protein that plays a role in silencing host antiviral defenses and promoting viral transcription. Does not seem to be essential for HBV infection. May be directly involved in development of cirrhosis and liver cancer (hepatocellular carcinoma). Most of cytosolic activities involve modulation of cytosolic calcium. The effect on apoptosis is controversial depending on the cell types in which the studies have been conducted. May induce apoptosis by localizing in mitochondria and causing loss of mitochondrial membrane potential. May also modulate apoptosis by binding host CFLAR, a key regulator of the death-inducing signaling complex (DISC). Promotes viral transcription by using the host E3 ubiquitin ligase DDB1 to target the SMC5-SMC6 complex to proteasomal degradation. This host complex would otherwise bind to viral episomal DNA, and prevents its transcription. Moderately stimulates transcription of many different viral and cellular transcription elements. Promoters and enhancers stimulated by HBx contain DNA binding sites for NF-kappa-B, AP-1, AP-2, c-EBP, ATF/CREB, or the calcium-activated factor NF-AT. The sequence is that of Protein X from Hepatitis B virus genotype B2 subtype adw (isolate China/patient4/1996) (HBV-B).